A 193-amino-acid chain; its full sequence is Pyridoxal 5'-phosphate synthase subunit PdxT (193 aa).

48–50 lines the L-glutamine pocket; sequence GES. Cysteine 80 (nucleophile) is an active-site residue. L-glutamine is bound by residues arginine 112 and 140 to 141; that span reads IR. Residues histidine 176 and glutamate 178 each act as charge relay system in the active site.

The protein belongs to the glutaminase PdxT/SNO family. In the presence of PdxS, forms a dodecamer of heterodimers. Only shows activity in the heterodimer.

The enzyme catalyses aldehydo-D-ribose 5-phosphate + D-glyceraldehyde 3-phosphate + L-glutamine = pyridoxal 5'-phosphate + L-glutamate + phosphate + 3 H2O + H(+). It carries out the reaction L-glutamine + H2O = L-glutamate + NH4(+). It functions in the pathway cofactor biosynthesis; pyridoxal 5'-phosphate biosynthesis. Catalyzes the hydrolysis of glutamine to glutamate and ammonia as part of the biosynthesis of pyridoxal 5'-phosphate. The resulting ammonia molecule is channeled to the active site of PdxS. The sequence is that of Pyridoxal 5'-phosphate synthase subunit PdxT from Mycolicibacterium smegmatis (strain ATCC 700084 / mc(2)155) (Mycobacterium smegmatis).